The primary structure comprises 141 residues: Hemoglobin subunit alpha-3 (141 aa).

A Globin domain is found at 1-141 (VLSPADKTNV…VSTVLTSKYR (141 aa)). An O2-binding site is contributed by histidine 58. Residue histidine 87 coordinates heme b.

It belongs to the globin family. As to quaternary structure, heterotetramer of two alpha chains and two beta chains. Red blood cells.

Involved in oxygen transport from the lung to the various peripheral tissues. The protein is Hemoglobin subunit alpha-3 of Gorilla gorilla gorilla (Western lowland gorilla).